Reading from the N-terminus, the 940-residue chain is Valine--tRNA ligase (940 aa).

The 'HIGH' region motif lies at 47–57 (PNVTGILHMGH). Residues 564–568 (KLSKS) carry the 'KMSKS' region motif. K567 lines the ATP pocket. Positions 872–938 (PMEHITKERN…LQSILDKLAS (67 aa)) form a coiled coil.

This sequence belongs to the class-I aminoacyl-tRNA synthetase family. ValS type 1 subfamily. Monomer.

It localises to the cytoplasm. The enzyme catalyses tRNA(Val) + L-valine + ATP = L-valyl-tRNA(Val) + AMP + diphosphate. Catalyzes the attachment of valine to tRNA(Val). As ValRS can inadvertently accommodate and process structurally similar amino acids such as threonine, to avoid such errors, it has a 'posttransfer' editing activity that hydrolyzes mischarged Thr-tRNA(Val) in a tRNA-dependent manner. In Chlamydia caviae (strain ATCC VR-813 / DSM 19441 / 03DC25 / GPIC) (Chlamydophila caviae), this protein is Valine--tRNA ligase.